The primary structure comprises 309 residues: F-box/LRR-repeat protein At3g48880 (309 aa).

The F-box domain maps to 10 to 57 (LRRWEELDTDILVRIFQKFSVFELTSGLAHVCRGWRAACCDPILWKTV). LRR repeat units follow at residues 77–107 (VERRSDEALTRILKLSMNLSGGSTRTLIFHF), 108–133 (NLFLSDDQLTYTAERCPGLRRVVLPA), 159–184 (SIANPPYLLTEIAKNCKNFKELKIMG), and 208–233 (CSAIKREALMKILDGLPSLEVLNISH).

This chain is F-box/LRR-repeat protein At3g48880, found in Arabidopsis thaliana (Mouse-ear cress).